Reading from the N-terminus, the 272-residue chain is Tryptophan synthase alpha chain (272 aa).

Residues Glu-49 and Glu-60 each act as proton acceptor in the active site.

This sequence belongs to the TrpA family. In terms of assembly, tetramer of two alpha and two beta chains.

It carries out the reaction (1S,2R)-1-C-(indol-3-yl)glycerol 3-phosphate + L-serine = D-glyceraldehyde 3-phosphate + L-tryptophan + H2O. It participates in amino-acid biosynthesis; L-tryptophan biosynthesis; L-tryptophan from chorismate: step 5/5. Its function is as follows. The alpha subunit is responsible for the aldol cleavage of indoleglycerol phosphate to indole and glyceraldehyde 3-phosphate. The sequence is that of Tryptophan synthase alpha chain from Legionella pneumophila (strain Corby).